The primary structure comprises 162 residues: Dihydrofolate reductase (162 aa).

Residues 3–161 (KITLIAACAE…TSYAFVHYLR (159 aa)) form the DHFR domain. Residue 7–9 (IAA) coordinates substrate. NADP(+)-binding positions include 8-9 (AA) and 16-21 (IGAGNA). Aspartate 29 is a substrate binding site. 45–48 (GRKT) contributes to the NADP(+) binding site. Substrate is bound at residue arginine 60. NADP(+)-binding positions include 65 to 68 (ISRQ) and 98 to 103 (MGGAQI). Residue threonine 117 coordinates substrate.

The protein belongs to the dihydrofolate reductase family.

The catalysed reaction is (6S)-5,6,7,8-tetrahydrofolate + NADP(+) = 7,8-dihydrofolate + NADPH + H(+). It functions in the pathway cofactor biosynthesis; tetrahydrofolate biosynthesis; 5,6,7,8-tetrahydrofolate from 7,8-dihydrofolate: step 1/1. Key enzyme in folate metabolism. Catalyzes an essential reaction for de novo glycine and purine synthesis, and for DNA precursor synthesis. This Neisseria meningitidis serogroup A / serotype 4A (strain DSM 15465 / Z2491) protein is Dihydrofolate reductase (folA).